A 245-amino-acid chain; its full sequence is 5-oxoprolinase subunit A (245 aa).

It belongs to the LamB/PxpA family. In terms of assembly, forms a complex composed of PxpA, PxpB and PxpC.

The enzyme catalyses 5-oxo-L-proline + ATP + 2 H2O = L-glutamate + ADP + phosphate + H(+). Catalyzes the cleavage of 5-oxoproline to form L-glutamate coupled to the hydrolysis of ATP to ADP and inorganic phosphate. This chain is 5-oxoprolinase subunit A, found in Erwinia tasmaniensis (strain DSM 17950 / CFBP 7177 / CIP 109463 / NCPPB 4357 / Et1/99).